A 143-amino-acid chain; its full sequence is NADH-quinone oxidoreductase subunit A (143 aa).

The next 3 helical transmembrane spans lie at 12-32, 61-81, and 90-110; these read YIVG…FLGG, FYLI…LYIW, and WIGF…LIYA.

The protein belongs to the complex I subunit 3 family. As to quaternary structure, NDH-1 is composed of 13 different subunits. Subunits NuoA, H, J, K, L, M, N constitute the membrane sector of the complex.

It localises to the cell inner membrane. The catalysed reaction is a quinone + NADH + 5 H(+)(in) = a quinol + NAD(+) + 4 H(+)(out). Its function is as follows. NDH-1 shuttles electrons from NADH, via FMN and iron-sulfur (Fe-S) centers, to quinones in the respiratory chain. The immediate electron acceptor for the enzyme in this species is believed to be ubiquinone. Couples the redox reaction to proton translocation (for every two electrons transferred, four hydrogen ions are translocated across the cytoplasmic membrane), and thus conserves the redox energy in a proton gradient. The protein is NADH-quinone oxidoreductase subunit A of Blochmanniella floridana.